The sequence spans 255 residues: Ditrans,polycis-undecaprenyl-diphosphate synthase ((2E,6E)-farnesyl-diphosphate specific) (255 aa).

Asp21 is a catalytic residue. Residue Asp21 coordinates Mg(2+). Substrate-binding positions include 22–25, Trp26, Arg34, His38, and 66–68; these read GNGR and SSE. Asn69 functions as the Proton acceptor in the catalytic mechanism. Substrate is bound by residues Trp70, Arg72, Arg189, and 195 to 197; that span reads RIS. Residue Glu208 participates in Mg(2+) binding.

It belongs to the UPP synthase family. Homodimer. The cofactor is Mg(2+).

It carries out the reaction 8 isopentenyl diphosphate + (2E,6E)-farnesyl diphosphate = di-trans,octa-cis-undecaprenyl diphosphate + 8 diphosphate. Functionally, catalyzes the sequential condensation of isopentenyl diphosphate (IPP) with (2E,6E)-farnesyl diphosphate (E,E-FPP) to yield (2Z,6Z,10Z,14Z,18Z,22Z,26Z,30Z,34E,38E)-undecaprenyl diphosphate (di-trans,octa-cis-UPP). UPP is the precursor of glycosyl carrier lipid in the biosynthesis of bacterial cell wall polysaccharide components such as peptidoglycan and lipopolysaccharide. The polypeptide is Ditrans,polycis-undecaprenyl-diphosphate synthase ((2E,6E)-farnesyl-diphosphate specific) (Xylella fastidiosa (strain 9a5c)).